The primary structure comprises 410 residues: Elongation factor Tu, chloroplastic (410 aa).

In terms of domain architecture, tr-type G spans 10–213; it reads KPHLNIGTIG…TVDEYIPTPK (204 aa). The interval 19–26 is G1; sequence GHVDHGKT. 19–26 contributes to the GTP binding site; that stretch reads GHVDHGKT. Mg(2+) is bound at residue threonine 26. Residues 60-64 form a G2 region; the sequence is GITIN. The interval 81–84 is G3; sequence DCPG. Residues 81-85 and 136-139 each bind GTP; these read DCPGH and NKAD. The interval 136–139 is G4; it reads NKAD. The segment at 174–176 is G5; that stretch reads SAI.

It belongs to the TRAFAC class translation factor GTPase superfamily. Classic translation factor GTPase family. EF-Tu/EF-1A subfamily.

It is found in the plastid. It localises to the chloroplast. It catalyses the reaction GTP + H2O = GDP + phosphate + H(+). GTP hydrolase that promotes the GTP-dependent binding of aminoacyl-tRNA to the A-site of ribosomes during protein biosynthesis. The protein is Elongation factor Tu, chloroplastic (tufA) of Codium fragile (Dead man's fingers).